The primary structure comprises 247 residues: 5'-nucleotidase SurE (247 aa).

Aspartate 8, aspartate 9, serine 39, and asparagine 91 together coordinate a divalent metal cation.

It belongs to the SurE nucleotidase family. Requires a divalent metal cation as cofactor.

The protein localises to the cytoplasm. It carries out the reaction a ribonucleoside 5'-phosphate + H2O = a ribonucleoside + phosphate. Nucleotidase that shows phosphatase activity on nucleoside 5'-monophosphates. This chain is 5'-nucleotidase SurE, found in Ruthia magnifica subsp. Calyptogena magnifica.